Consider the following 92-residue polypeptide: Putative pterin-4-alpha-carbinolamine dehydratase (92 aa).

Belongs to the pterin-4-alpha-carbinolamine dehydratase family.

It carries out the reaction (4aS,6R)-4a-hydroxy-L-erythro-5,6,7,8-tetrahydrobiopterin = (6R)-L-erythro-6,7-dihydrobiopterin + H2O. This Acidobacterium capsulatum (strain ATCC 51196 / DSM 11244 / BCRC 80197 / JCM 7670 / NBRC 15755 / NCIMB 13165 / 161) protein is Putative pterin-4-alpha-carbinolamine dehydratase.